Here is a 290-residue protein sequence, read N- to C-terminus: uncharacterized protein (290 aa).

An AB hydrolase-1 domain is found at 30 to 274 (PTILLLHGFP…YDTGHFALET (245 aa)). His-269 is a catalytic residue.

The protein belongs to the DmpD/TodF/XylF esterase family.

This is an uncharacterized protein from Saccharomyces cerevisiae (strain ATCC 204508 / S288c) (Baker's yeast).